Reading from the N-terminus, the 139-residue chain is Small ribosomal subunit protein bS6 (139 aa).

A disordered region spans residues 119-139 (LKGASKVETPTGPESTDIQEK). A compositionally biased stretch (polar residues) spans 130–139 (GPESTDIQEK).

It belongs to the bacterial ribosomal protein bS6 family.

Its function is as follows. Binds together with bS18 to 16S ribosomal RNA. This chain is Small ribosomal subunit protein bS6, found in Borreliella burgdorferi (strain ZS7) (Borrelia burgdorferi).